Reading from the N-terminus, the 89-residue chain is Ubiquinol-cytochrome-c reductase complex assembly factor 3 (89 aa).

Topologically, residues 1-7 (MEAARKA) are mitochondrial matrix. Residues 8 to 28 (LAVVAVLGAGGGVGSILFALV) traverse the membrane as a helical segment. The segment at 23 to 80 (ILFALVTPGELQKQLMLQEMPERDSRRRDEAVRTKELVMATLKDAAATKENVAWRRNW) is mediates lipid-binding. Over 29 to 89 (TPGELQKQLM…WTVRGDGRSA (61 aa)) the chain is Mitochondrial intermembrane.

The protein belongs to the UQCC3 family. As to quaternary structure, associates with the ubiquinol-cytochrome c reductase complex (mitochondrial respiratory chain complex III(CIII) or cytochrome b-c1 complex). Interacts with UQCC1. Forms a complex, named COMC, composed of UQCC1, UQCC2; UQCC3 and UQCC4; mediates MT-CYB hemylation and association with the first nuclear-encoded complex III subunit UQCRQ. In terms of processing, probably cleaved by OMA1 under mitochondrial stress conditions.

Its subcellular location is the mitochondrion inner membrane. In terms of biological role, required for the assembly of the ubiquinol-cytochrome c reductase complex (mitochondrial respiratory chain complex III or cytochrome b-c1 complex), mediating cytochrome b recruitment and probably stabilization within the complex. Thereby, plays an important role in ATP production by mitochondria. Cardiolipin-binding protein, it may also control the cardiolipin composition of mitochondria membranes and their morphology. This is Ubiquinol-cytochrome-c reductase complex assembly factor 3 from Rattus norvegicus (Rat).